The sequence spans 135 residues: D-ribose pyranase (135 aa).

His-20 serves as the catalytic Proton donor. Residues Asp-28, His-102, and 124 to 126 (YSN) contribute to the substrate site.

This sequence belongs to the RbsD / FucU family. RbsD subfamily. Homodecamer.

Its subcellular location is the cytoplasm. The enzyme catalyses beta-D-ribopyranose = beta-D-ribofuranose. It participates in carbohydrate metabolism; D-ribose degradation; D-ribose 5-phosphate from beta-D-ribopyranose: step 1/2. Its function is as follows. Catalyzes the interconversion of beta-pyran and beta-furan forms of D-ribose. This chain is D-ribose pyranase, found in Thermotoga petrophila (strain ATCC BAA-488 / DSM 13995 / JCM 10881 / RKU-1).